The following is a 167-amino-acid chain: MVMAKVDPNEGLQEKLVQVNRVAKVVKGGRIFGFTALTVVGDGKGKVGFGRGKAREVPAAIQKALEAARRNMIQVELNGTTIQHPMKARHGASKVYMQPADEGTGVIAGGAMRAVLEVAGVQNVLAKCYGSTNPVNVVRATFNGLKSMASPESVAAKRGKSVDEILN.

The region spanning 12–75 (LQEKLVQVNR…EAARRNMIQV (64 aa)) is the S5 DRBM domain.

This sequence belongs to the universal ribosomal protein uS5 family. In terms of assembly, part of the 30S ribosomal subunit. Contacts proteins S4 and S8.

In terms of biological role, with S4 and S12 plays an important role in translational accuracy. Its function is as follows. Located at the back of the 30S subunit body where it stabilizes the conformation of the head with respect to the body. This Alcanivorax borkumensis (strain ATCC 700651 / DSM 11573 / NCIMB 13689 / SK2) protein is Small ribosomal subunit protein uS5.